The chain runs to 240 residues: Ubiquinone biosynthesis O-methyltransferase (240 aa).

Positions 44, 64, 85, and 129 each coordinate S-adenosyl-L-methionine.

Belongs to the methyltransferase superfamily. UbiG/COQ3 family.

It catalyses the reaction a 3-demethylubiquinol + S-adenosyl-L-methionine = a ubiquinol + S-adenosyl-L-homocysteine + H(+). The enzyme catalyses a 3-(all-trans-polyprenyl)benzene-1,2-diol + S-adenosyl-L-methionine = a 2-methoxy-6-(all-trans-polyprenyl)phenol + S-adenosyl-L-homocysteine + H(+). The protein operates within cofactor biosynthesis; ubiquinone biosynthesis. O-methyltransferase that catalyzes the 2 O-methylation steps in the ubiquinone biosynthetic pathway. The sequence is that of Ubiquinone biosynthesis O-methyltransferase from Escherichia coli O6:K15:H31 (strain 536 / UPEC).